We begin with the raw amino-acid sequence, 572 residues long: Methionine--tRNA ligase (572 aa).

The 'HIGH' region signature appears at 11 to 21 (PYINGIKHLGN). C143, C146, C156, and C159 together coordinate Zn(2+). The 'KMSKS' region signature appears at 346 to 350 (QFSTS). T349 is an ATP binding site.

It belongs to the class-I aminoacyl-tRNA synthetase family. MetG type 1 subfamily. Monomer. The cofactor is Zn(2+).

The protein resides in the cytoplasm. It carries out the reaction tRNA(Met) + L-methionine + ATP = L-methionyl-tRNA(Met) + AMP + diphosphate. Functionally, is required not only for elongation of protein synthesis but also for the initiation of all mRNA translation through initiator tRNA(fMet) aminoacylation. The chain is Methionine--tRNA ligase from Dinoroseobacter shibae (strain DSM 16493 / NCIMB 14021 / DFL 12).